The primary structure comprises 217 residues: Small ribosomal subunit protein uS3 (217 aa).

In terms of domain architecture, KH type-2 spans 38–106 (IRKFIQKELA…QVHINIIEIK (69 aa)).

The protein belongs to the universal ribosomal protein uS3 family. In terms of assembly, part of the 30S ribosomal subunit. Forms a tight complex with proteins S10 and S14.

Its function is as follows. Binds the lower part of the 30S subunit head. Binds mRNA in the 70S ribosome, positioning it for translation. This is Small ribosomal subunit protein uS3 from Streptococcus uberis (strain ATCC BAA-854 / 0140J).